We begin with the raw amino-acid sequence, 198 residues long: Peptidyl-tRNA hydrolase (198 aa).

Tyrosine 18 provides a ligand contact to tRNA. Histidine 23 functions as the Proton acceptor in the catalytic mechanism. The tRNA site is built by tyrosine 69, asparagine 71, and asparagine 117.

It belongs to the PTH family. In terms of assembly, monomer.

The protein localises to the cytoplasm. It catalyses the reaction an N-acyl-L-alpha-aminoacyl-tRNA + H2O = an N-acyl-L-amino acid + a tRNA + H(+). In terms of biological role, hydrolyzes ribosome-free peptidyl-tRNAs (with 1 or more amino acids incorporated), which drop off the ribosome during protein synthesis, or as a result of ribosome stalling. Its function is as follows. Catalyzes the release of premature peptidyl moieties from peptidyl-tRNA molecules trapped in stalled 50S ribosomal subunits, and thus maintains levels of free tRNAs and 50S ribosomes. In Aeromonas hydrophila subsp. hydrophila (strain ATCC 7966 / DSM 30187 / BCRC 13018 / CCUG 14551 / JCM 1027 / KCTC 2358 / NCIMB 9240 / NCTC 8049), this protein is Peptidyl-tRNA hydrolase.